We begin with the raw amino-acid sequence, 296 residues long: Phosphoribosylaminoimidazole-succinocarboxamide synthase (296 aa).

This sequence belongs to the SAICAR synthetase family.

It carries out the reaction 5-amino-1-(5-phospho-D-ribosyl)imidazole-4-carboxylate + L-aspartate + ATP = (2S)-2-[5-amino-1-(5-phospho-beta-D-ribosyl)imidazole-4-carboxamido]succinate + ADP + phosphate + 2 H(+). Its pathway is purine metabolism; IMP biosynthesis via de novo pathway; 5-amino-1-(5-phospho-D-ribosyl)imidazole-4-carboxamide from 5-amino-1-(5-phospho-D-ribosyl)imidazole-4-carboxylate: step 1/2. The protein is Phosphoribosylaminoimidazole-succinocarboxamide synthase of Geotalea uraniireducens (strain Rf4) (Geobacter uraniireducens).